A 149-amino-acid polypeptide reads, in one-letter code: Protein NrdI (149 aa).

It belongs to the NrdI family.

In terms of biological role, probably involved in ribonucleotide reductase function. In Malacoplasma penetrans (strain HF-2) (Mycoplasma penetrans), this protein is Protein NrdI.